Consider the following 910-residue polypeptide: MAKIYVDGKAYCMSESDNLLQACLSSGLNIPYFCWHPILGSLGACRQCAVTQYNSSLDNQGKLIMSCMTPVIDGTIISINDDTSKKFRSNIVELLLTNHPHDCPVCEEGGNCHLQDMTVMTTHNFRNYRFSKRTHKNQYLGSFIKHEMNRCIGCYRCVRYYRDYADGTDLDVYGANNNIYFGRIEHGVLENEHSGNLIEICPTGVFTDKTHSKKYNRKWDMQYAPGICQNCSIGCNISIGERYGEIRRIENRYHESINHYLICDLGRFGYSHTNLKNRPKKPILSTKENDVNILNFNKAIEYATNFFQRYKNVIGVGSIRSSIENNFALQELVGKENFCNGMSDKENSCIKLILDTLKNNQLYIPSLKEIESYDTILILGEDLTQTAPRIALAVRQAMKNKAKDLAELYGIPKWNAAPISQISEIYKNYLYIFNTHETKLDNIADWSYFSSIDNQVRFARAIAYELDKNLPDISFLDSNLRKKASLIAKKIISSKKVLIISGSHVYSKSIIQASINIAISINQKNINHVGLTFVTSSSNTLGLGILGGFSIENALKKLKNREAEAIIFMEYDLYRYISKHDCDVLFKKNDNIMSIDHQYTQTYKNSGFALPSVNFTESSGTIVNFEGRAQRFFQVYDPMFYDKKNCLYVSWKWLSFIKSKIEKKEISWINLDNIISEYSDKYPIFKKIKTAGPNASFRVHGQKIARSPHRSSGRTALRANINIHEPSQPKDADTMFSFSMEGYSQPNKSISHIPFAWFPGWNSPQAWNKFQKEIGRQLISGDSGVHLFKSNKKILDIYFHFSPKKFIKEKYWYVIPYYHIFGNEELTQYSSIIKQNIPLEYVLISELDGLELGLKKNSIVEFNCLNQDFRLPIRLSKHLTSKHIGLPIGRKGFPISLIGEKVKSLWEVMS.

Residues 1–83 enclose the 2Fe-2S ferredoxin-type domain; the sequence is MAKIYVDGKA…GTIISINDDT (83 aa). The [2Fe-2S] cluster site is built by Cys34, Cys45, Cys48, and Cys67. Residues 83–122 form the 4Fe-4S His(Cys)3-ligated-type domain; sequence TSKKFRSNIVELLLTNHPHDCPVCEEGGNCHLQDMTVMTT. Residues His99, Cys103, Cys106, Cys112, Cys151, Cys154, Cys157, Cys201, Cys228, Cys231, Cys235, and Cys263 each contribute to the [4Fe-4S] cluster site. Residues 221 to 277 form the 4Fe-4S Mo/W bis-MGD-type domain; that stretch reads MQYAPGICQNCSIGCNISIGERYGEIRRIENRYHESINHYLICDLGRFGYSHTNLKN.

This sequence belongs to the complex I 75 kDa subunit family. As to quaternary structure, composed of 13 different subunits. Subunits NuoCD, E, F, and G constitute the peripheral sector of the complex. [2Fe-2S] cluster is required as a cofactor. It depends on [4Fe-4S] cluster as a cofactor.

The catalysed reaction is a quinone + NADH + 5 H(+)(in) = a quinol + NAD(+) + 4 H(+)(out). In terms of biological role, NDH-1 shuttles electrons from NADH, via FMN and iron-sulfur (Fe-S) centers, to quinones in the respiratory chain. Couples the redox reaction to proton translocation (for every two electrons transferred, four hydrogen ions are translocated across the cytoplasmic membrane), and thus conserves the redox energy in a proton gradient. The polypeptide is NADH-quinone oxidoreductase subunit G (nuoG) (Buchnera aphidicola subsp. Schizaphis graminum (strain Sg)).